The following is a 243-amino-acid chain: Peptidyl-tRNA hydrolase (243 aa).

Residue Tyr14 coordinates tRNA. Residue His19 is the Proton acceptor of the active site. TRNA-binding residues include Phe64, Asn66, and Asn112. Positions 190-205 (KAEEEKPAKEMKDAGK) are enriched in basic and acidic residues. Residues 190–243 (KAEEEKPAKEMKDAGKKPASQSHIHQARNHNQPKLPATGPMADMLKKMFGKKGD) form a disordered region. A compositionally biased stretch (polar residues) spans 208–221 (ASQSHIHQARNHNQ).

It belongs to the PTH family. In terms of assembly, monomer.

The protein localises to the cytoplasm. The catalysed reaction is an N-acyl-L-alpha-aminoacyl-tRNA + H2O = an N-acyl-L-amino acid + a tRNA + H(+). Functionally, hydrolyzes ribosome-free peptidyl-tRNAs (with 1 or more amino acids incorporated), which drop off the ribosome during protein synthesis, or as a result of ribosome stalling. In terms of biological role, catalyzes the release of premature peptidyl moieties from peptidyl-tRNA molecules trapped in stalled 50S ribosomal subunits, and thus maintains levels of free tRNAs and 50S ribosomes. This is Peptidyl-tRNA hydrolase from Rhizobium johnstonii (strain DSM 114642 / LMG 32736 / 3841) (Rhizobium leguminosarum bv. viciae).